The primary structure comprises 350 residues: Dihydroorotate dehydrogenase (quinone) (350 aa).

FMN-binding positions include 61–65 (AGLDK) and T85. K65 contributes to the substrate binding site. 110-114 (NRMGF) is a substrate binding site. Residues N139 and N172 each contribute to the FMN site. N172 contributes to the substrate binding site. The active-site Nucleophile is the S175. Position 177 (N177) interacts with substrate. FMN contacts are provided by K217 and T245. Substrate is bound at residue 246-247 (NT). Residues G268, G297, and 318-319 (YS) contribute to the FMN site.

The protein belongs to the dihydroorotate dehydrogenase family. Type 2 subfamily. In terms of assembly, monomer. FMN is required as a cofactor.

It localises to the cell membrane. The catalysed reaction is (S)-dihydroorotate + a quinone = orotate + a quinol. It participates in pyrimidine metabolism; UMP biosynthesis via de novo pathway; orotate from (S)-dihydroorotate (quinone route): step 1/1. Catalyzes the conversion of dihydroorotate to orotate with quinone as electron acceptor. This Flavobacterium lutescens protein is Dihydroorotate dehydrogenase (quinone).